The primary structure comprises 250 residues: AA9 family lytic polysaccharide monooxygenase E (250 aa).

The first 21 residues, 1-21 (MAMSKIMSLTGLLASASLVAG), serve as a signal peptide directing secretion. Cu(2+) contacts are provided by H22 and H107. 2 disulfides stabilise this stretch: C77–C199 and C118–C122. N159 carries N-linked (GlcNAc...) asparagine glycosylation. O2-binding residues include H185 and Q194. Residue Y196 participates in Cu(2+) binding.

This sequence belongs to the polysaccharide monooxygenase AA9 family. The cofactor is Cu(2+).

The protein resides in the secreted. The enzyme catalyses [(1-&gt;4)-beta-D-glucosyl]n+m + reduced acceptor + O2 = 4-dehydro-beta-D-glucosyl-[(1-&gt;4)-beta-D-glucosyl]n-1 + [(1-&gt;4)-beta-D-glucosyl]m + acceptor + H2O.. Functionally, lytic polysaccharide monooxygenase (LPMO) that depolymerizes crystalline and amorphous polysaccharides via the oxidation of scissile alpha- or beta-(1-4)-glycosidic bonds, yielding C1 or C4 oxidation products. Catalysis by LPMOs requires the reduction of the active-site copper from Cu(II) to Cu(I) by a reducing agent and H(2)O(2) or O(2) as a cosubstrate. In Aspergillus tamarii, this protein is AA9 family lytic polysaccharide monooxygenase E.